The sequence spans 400 residues: MGIFLAVPEIIAASIAGGAEALSIAGSGAAIATGEGLAALGGITEGAALLGETIPISEAATTVLTKVPELVQATQAVTAAVQGGAGLVGGIYTALASDHPGDLPPNTPTGSASGLHPTSGYNPQGAGLNLQSVHKPIHAPYSGMALVPIPEYQLETGIPGIPDWLFNLVASYLPELPSLQDVFNRIAFGIWSSYYNAGSTVVNRVLSDEIQRLLRDLEYGFRATLASIGESDPVNAIATQVRSLATTARERELLQITAGQPLDLSRPTSALSAAAGALTEAAYNFIYDASSLPKDGFNALSEGVHRLGQWISFSGPTGGTPHYATPDWILYVLEQLNADTYKIPTQAVKRKQDELHPVSPTKKANKAKKSSSPGTNSGNRSKKRRGRSTSRSTTVRRNRI.

Residue Gly-2 is the site of N-myristoyl glycine; by host attachment. A disordered region spans residues 99-118 (HPGDLPPNTPTGSASGLHPT). The tract at residues 307-342 (LGQWISFSGPTGGTPHYATPDWILYVLEQLNADTYK) is D1. The interval 347–394 (AVKRKQDELHPVSPTKKANKAKKSSSPGTNSGNRSKKRRGRSTSRSTT) is DNA-binding. The interval 348–400 (VKRKQDELHPVSPTKKANKAKKSSSPGTNSGNRSKKRRGRSTSRSTTVRRNRI) is disordered. Positions 359–369 (SPTKKANKAKK) match the Nuclear localization signal motif. The span at 370–379 (SSSPGTNSGN) shows a compositional bias: low complexity. Over residues 380–400 (RSKKRRGRSTSRSTTVRRNRI) the composition is skewed to basic residues.

The protein belongs to the polyomaviruses capsid protein VP2 family. As to quaternary structure, forms homooligomers, and heterooligomers with VP3 in the endoplasmic reticulum membrane. Interacts (via D1 domain) with VP1. Interacts (via D1 domain) with VP1.

The protein resides in the virion. It is found in the host nucleus. The protein localises to the host endoplasmic reticulum. Its subcellular location is the host endoplasmic reticulum membrane. Its function is as follows. Isoform VP2 is a structural protein that resides within the core of the capsid surrounded by 72 VP1 pentamers. Participates in host cell receptor binding together with VP1. Following virus endocytosis and trafficking to the endoplasmic reticulum, VP2 and VP3 form oligomers and integrate into the endoplasmic reticulum membrane. Heterooligomer VP2-VP3 may create a viroporin for transporting the viral genome across the endoplasmic reticulum membrane to the cytoplasm. Nuclear entry of the viral DNA involves the selective exposure and importin recognition of VP2 or VP3 nuclear localization signal (shared C-terminus). Plays a role in virion assembly within the nucleus in particular through a DNA-binding domain located in the C-terminal region. An N-terminal myristoylation suggests a scaffold function for virion assembly. Structural protein that resides within the core of the capsid surrounded by 72 VP1 pentamers. Following virus endocytosis and trafficking to the endoplasmic reticulum, VP2 and VP3 form oligomers and integrate into the endoplasmic reticulum membrane. Heterooligomer VP2-VP3 may create a viroporin for transporting the viral genome across the endoplasmic reticulum membrane to the cytoplasm. Nuclear entry of the viral DNA involves the selective exposure and importin recognition of VP2 or VP3 nuclear localization signal (shared C-terminus). Plays a role in virion assembly within the nucleus. This chain is Minor capsid protein VP2, found in KI polyomavirus (isolate Stockholm 380) (KIPyV).